The sequence spans 366 residues: tRNA/tmRNA (uracil-C(5))-methyltransferase (366 aa).

5 residues coordinate S-adenosyl-L-methionine: Q190, Y218, N223, E239, and D299. The active-site Nucleophile is the C324. The active-site Proton acceptor is the E358.

This sequence belongs to the class I-like SAM-binding methyltransferase superfamily. RNA M5U methyltransferase family. TrmA subfamily.

It catalyses the reaction uridine(54) in tRNA + S-adenosyl-L-methionine = 5-methyluridine(54) in tRNA + S-adenosyl-L-homocysteine + H(+). It carries out the reaction uridine(341) in tmRNA + S-adenosyl-L-methionine = 5-methyluridine(341) in tmRNA + S-adenosyl-L-homocysteine + H(+). Functionally, dual-specificity methyltransferase that catalyzes the formation of 5-methyluridine at position 54 (m5U54) in all tRNAs, and that of position 341 (m5U341) in tmRNA (transfer-mRNA). In Shigella dysenteriae serotype 1 (strain Sd197), this protein is tRNA/tmRNA (uracil-C(5))-methyltransferase.